The primary structure comprises 386 residues: ATP synthase subunit a (386 aa).

Helical transmembrane passes span 150-170 (FTNE…LFFV), 243-263 (HFLI…IVGF), 270-290 (FFSF…LVLL), and 310-330 (MMAG…MLFL).

It belongs to the ATPase A chain family. In terms of assembly, F-type ATPases have 2 components, CF(1) - the catalytic core - and CF(0) - the membrane proton channel. CF(1) has five subunits: alpha(3), beta(3), gamma(1), delta(1), epsilon(1). CF(0) has three main subunits: a, b and c.

The protein resides in the mitochondrion inner membrane. Mitochondrial membrane ATP synthase (F(1)F(0) ATP synthase or Complex V) produces ATP from ADP in the presence of a proton gradient across the membrane which is generated by electron transport complexes of the respiratory chain. F-type ATPases consist of two structural domains, F(1) - containing the extramembraneous catalytic core and F(0) - containing the membrane proton channel, linked together by a central stalk and a peripheral stalk. During catalysis, ATP synthesis in the catalytic domain of F(1) is coupled via a rotary mechanism of the central stalk subunits to proton translocation. Key component of the proton channel; it may play a direct role in the translocation of protons across the membrane. This Triticum aestivum (Wheat) protein is ATP synthase subunit a (ATP6).